A 248-amino-acid chain; its full sequence is Ubiquinone/menaquinone biosynthesis C-methyltransferase UbiE (248 aa).

Positions 68 and 92 each coordinate S-adenosyl-L-methionine.

The protein belongs to the class I-like SAM-binding methyltransferase superfamily. MenG/UbiE family.

It catalyses the reaction a 2-demethylmenaquinol + S-adenosyl-L-methionine = a menaquinol + S-adenosyl-L-homocysteine + H(+). The enzyme catalyses a 2-methoxy-6-(all-trans-polyprenyl)benzene-1,4-diol + S-adenosyl-L-methionine = a 5-methoxy-2-methyl-3-(all-trans-polyprenyl)benzene-1,4-diol + S-adenosyl-L-homocysteine + H(+). It functions in the pathway quinol/quinone metabolism; menaquinone biosynthesis; menaquinol from 1,4-dihydroxy-2-naphthoate: step 2/2. It participates in cofactor biosynthesis; ubiquinone biosynthesis. In terms of biological role, methyltransferase required for the conversion of demethylmenaquinol (DMKH2) to menaquinol (MKH2) and the conversion of 2-polyprenyl-6-methoxy-1,4-benzoquinol (DDMQH2) to 2-polyprenyl-3-methyl-6-methoxy-1,4-benzoquinol (DMQH2). The polypeptide is Ubiquinone/menaquinone biosynthesis C-methyltransferase UbiE (Rickettsia bellii (strain RML369-C)).